Consider the following 187-residue polypeptide: Probable RNA 2'-phosphotransferase (187 aa).

The protein belongs to the KptA/TPT1 family.

Its function is as follows. Removes the 2'-phosphate from RNA via an intermediate in which the phosphate is ADP-ribosylated by NAD followed by a presumed transesterification to release the RNA and generate ADP-ribose 1''-2''-cyclic phosphate (APPR&gt;P). May function as an ADP-ribosylase. The chain is Probable RNA 2'-phosphotransferase from Pseudomonas syringae pv. tomato (strain ATCC BAA-871 / DC3000).